We begin with the raw amino-acid sequence, 229 residues long: Ribonuclease 3 (229 aa).

The RNase III domain maps to 5–127 (LSRLERKLGH…LIGAIYLDAG (123 aa)). E40 serves as a coordination point for Mg(2+). D44 is an active-site residue. Positions 113 and 116 each coordinate Mg(2+). Residue E116 is part of the active site. Residues 154 to 224 (DPKTRLQEFL…AAAALIALGV (71 aa)) enclose the DRBM domain.

It belongs to the ribonuclease III family. Homodimer. It depends on Mg(2+) as a cofactor.

It localises to the cytoplasm. The catalysed reaction is Endonucleolytic cleavage to 5'-phosphomonoester.. Functionally, digests double-stranded RNA. Involved in the processing of primary rRNA transcript to yield the immediate precursors to the large and small rRNAs (23S and 16S). Processes some mRNAs, and tRNAs when they are encoded in the rRNA operon. Processes pre-crRNA and tracrRNA of type II CRISPR loci if present in the organism. The sequence is that of Ribonuclease 3 from Ectopseudomonas mendocina (strain ymp) (Pseudomonas mendocina).